A 113-amino-acid polypeptide reads, in one-letter code: MHEMAICMGIIQIVEEKVRERSSSRVRSVCLELGTLSHAAPEAIRFCFAVAAMRTVAEGAALNIVELPGVAWCMSCSKSVEIARRGDCCPCCGSYQLQVTAGEQMRVKALEID.

Position 2 (His-2) interacts with Ni(2+). Residues Cys-73, Cys-76, Cys-89, and Cys-92 each contribute to the Zn(2+) site.

Belongs to the HypA/HybF family.

In terms of biological role, involved in the maturation of [NiFe] hydrogenases. Required for nickel insertion into the metal center of the hydrogenase. The protein is Hydrogenase maturation factor HypA 1 of Bradyrhizobium diazoefficiens (strain JCM 10833 / BCRC 13528 / IAM 13628 / NBRC 14792 / USDA 110).